A 681-amino-acid chain; its full sequence is PTS system glucose-specific EIICBA component (681 aa).

One can recognise a PTS EIIC type-1 domain in the interval Lys3 to Asp414. The next 10 membrane-spanning stretches (helical) occupy residues Leu16–Met36, Met73–Ala93, Ile126–Ala146, Phe170–Trp190, Ala199–Ile219, Phe273–Tyr293, Val303–Pro323, Phe328–Leu348, Leu355–Pro375, and Val383–Val403. Residues Thr425 to Glu506 enclose the PTS EIIB type-1 domain. Cys447 functions as the Phosphocysteine intermediate; for EIIB activity in the catalytic mechanism. In terms of domain architecture, PTS EIIA type-1 spans Asp551–Gln655. The Tele-phosphohistidine intermediate; for EIIA activity role is filled by His603.

The protein resides in the cell membrane. The catalysed reaction is N(pros)-phospho-L-histidyl-[protein] + D-glucose(out) = D-glucose 6-phosphate(in) + L-histidyl-[protein]. Functionally, the phosphoenolpyruvate-dependent sugar phosphotransferase system (sugar PTS), a major carbohydrate active transport system, catalyzes the phosphorylation of incoming sugar substrates concomitantly with their translocation across the cell membrane. This system is involved in glucose transport. The polypeptide is PTS system glucose-specific EIICBA component (ptsG) (Staphylococcus aureus (strain bovine RF122 / ET3-1)).